Consider the following 455-residue polypeptide: Gastric inhibitory polypeptide receptor (455 aa).

The N-terminal stretch at 1-18 (MPLRLLLLLLWLWGLSLQ) is a signal peptide. Topologically, residues 19–135 (RAETDSEGQT…DQKLILERLQ (117 aa)) are extracellular. Cystine bridges form between Cys43/Cys67, Cys58/Cys100, and Cys81/Cys115. Residues Asn59, Asn69, and Asn74 are each glycosylated (N-linked (GlcNAc...) asparagine). Residues 136-158 (VVYTVGYSLSLATLLLALLILSL) traverse the membrane as a helical segment. Residues 159–166 (FRRLHCTR) lie on the Cytoplasmic side of the membrane. A helical transmembrane segment spans residues 167-186 (NYIHMNLFTSFMLRAGAILT). Topologically, residues 187-214 (RDQLLPPLGPYTGNQTPTLWNQALAACR) are extracellular. A helical membrane pass occupies residues 215–239 (TAQILTQYCVGANYTWLLVEGVYLH). The Cytoplasmic portion of the chain corresponds to 240–251 (HLLVVVRRSEKG). A helical transmembrane segment spans residues 252–275 (HFRCYLLLGWGAPALFVIPWVIVR). Residues 276 to 290 (YLYENTQCWERNEVK) are Extracellular-facing. The chain crosses the membrane as a helical span at residues 291 to 316 (AIWWIIRTPILITILINFLIFIRILG). At 317–338 (ILVSKLRTRQMRCPDYRLRLAR) the chain is on the cytoplasmic side. A helical transmembrane segment spans residues 339 to 359 (STLTLMPLLGVHEVVFAPVTE). Residues 360–374 (EQAEGSLRFAKLAFE) lie on the Extracellular side of the membrane. The helical transmembrane segment at 375 to 395 (IFLSSFQGFLVSVLYCFINKE) threads the bilayer. The Cytoplasmic portion of the chain corresponds to 396–455 (VQSEIRRLRLSLQEQCPRPHLGQAPRAVPLSSAPQEAAIRNALPSGMLHVPGDEVLESYC).

It belongs to the G-protein coupled receptor 2 family. In terms of assembly, may form homodimers and heterodimers with GLP1R. N-glycosylation is required for cell surface expression and lengthens receptor half-life by preventing degradation in the ER. Present in the pancreas as well as the gut, adipose tissue, heart, pituitary, and inner layers of the adrenal cortex, whereas it is not found in kidney, spleen, or liver. It is also expressed in several brain regions, including the cerebral cortex, hippocampus, and olfactory bulb.

It localises to the cell membrane. Its function is as follows. This is a receptor for GIP. The activity of this receptor is mediated by G proteins which activate adenylyl cyclase. The chain is Gastric inhibitory polypeptide receptor (Gipr) from Rattus norvegicus (Rat).